The following is a 1499-amino-acid chain: DENN domain-containing protein 4B (1499 aa).

A disordered region spans residues 26-45; it reads PEEKWVPEPTGPLRPPRPAE. Over residues 34–44 the composition is skewed to pro residues; it reads PTGPLRPPRPA. One can recognise an MABP domain in the interval 44–203; it reads AEPITDVAVI…AVYLCYKVGL (160 aa). The uDENN domain occupies 195–369; sequence VYLCYKVGLA…NVPFPSPQRP (175 aa). One can recognise a cDENN domain in the interval 390–526; the sequence is PLPLSGASFL…PYKLLLATLT (137 aa). The dDENN domain maps to 528–644; the sequence is LYQQLDQTYT…ECSFGSARHA (117 aa). Residues 717-744 are disordered; sequence PQEQQGALPVPGPSRSAPSSPAPRRTKQ. The span at 729–739 shows a compositional bias: low complexity; the sequence is PSRSAPSSPAP. PPR repeat units follow at residues 775 to 811 and 812 to 846; these read WFLCLPAYVRSVPSRVRALHTAYHVLREMENRKVVLP and DEVCYRVLMQLCSHYGQPVLSVRVMLEMRRAGIVP. Disordered stretches follow at residues 890 to 968, 988 to 1115, and 1204 to 1226; these read PLKD…ARGT, PRGS…SLGS, and RPSAPSPKSSLAGASGCKDAPAP. The segment covering 897–915 has biased composition (low complexity); the sequence is QQQQQQQQQQQKQQVAEQQ. The span at 933-942 shows a compositional bias: polar residues; sequence RPLQRQTTWA. Ser-951 carries the post-translational modification Phosphoserine. Residues 1074-1083 are compositionally biased toward pro residues; it reads IPPPELPSDL. Ser-1090 carries the post-translational modification Phosphoserine. Over residues 1103-1115 the composition is skewed to low complexity; the sequence is GSTASESSASLGS.

The protein resides in the golgi apparatus. Functionally, guanine nucleotide exchange factor (GEF) which may activate RAB10. Promotes the exchange of GDP to GTP, converting inactive GDP-bound Rab proteins into their active GTP-bound form. In Mus musculus (Mouse), this protein is DENN domain-containing protein 4B (Dennd4b).